The primary structure comprises 520 residues: Rho GTPase-activating protein gacV (520 aa).

The chain crosses the membrane as a helical span at residues 8 to 28 (NIKTYYIIGIITLIFIVSAVI). The stretch at 28-192 (IKNQLSSSNQ…EEQEEEQFSM (165 aa)) forms a coiled coil. Disordered regions lie at residues 33-73 (SSSN…KLDN), 121-189 (EEKQ…EEEQ), 348-373 (NNNN…NNNE), and 489-520 (LQEQ…DQEE). Basic residues predominate over residues 52–62 (SKGRGNKKGKK). Basic and acidic residues predominate over residues 63–73 (PEKIQEKKLDN). The segment covering 140–189 (QEEEEEEEEQQEIEEDEEEEEGQEQEEEEEQQEIEEGEEEQQEEEQEEEQ) has biased composition (acidic residues). Residues 195-472 (VSIERLMDFQ…ILLKQKKEIA (278 aa)) form the Rho-GAP domain. A compositionally biased stretch (low complexity) spans 348-372 (NNNNNNNNNNNNNNNNNNDNNNNNN). Positions 480-520 (YFKDEYSKKLQEQNDQEEDNQEEEKDNQEEDEDEEDKDQEE) form a coiled coil. Acidic residues predominate over residues 493 to 520 (NDQEEDNQEEEKDNQEEDEDEEDKDQEE).

Its subcellular location is the membrane. Its function is as follows. Rho GTPase-activating protein involved in the signal transduction pathway. The polypeptide is Rho GTPase-activating protein gacV (gacV) (Dictyostelium discoideum (Social amoeba)).